A 265-amino-acid polypeptide reads, in one-letter code: MIKWPWKTNDAGRNMALPWDEALAIPVLANLQPDEQSKLVQLADRFLQQKRLVPLQGFELDPLKNARIALLFCLPVLELGIEWLDGFHEVLIYPAPFVVDDEWQDDFGLVHNQRVVQSGQSWQQGPIILNWLDIQDSFDASGFNLIIHEVAHKLDTRNGDRASGVPLIPLREVAGWEHDLHAAMDNIQDEIDLVGESAASIDAYAATDPAECFAVLSEYFFSAPELFAPRFPALWQRFCQFYQQDPLLRLRQNEDPAGNSSHQLH.

His-111, His-148, His-152, and Glu-211 together coordinate Zn(2+).

Belongs to the MtfA family. In terms of assembly, interacts with Mlc. Zn(2+) is required as a cofactor.

The protein localises to the cytoplasm. In terms of biological role, involved in the modulation of the activity of the glucose-phosphotransferase system (glucose-PTS). Interacts with the transcriptional repressor Mlc, preventing its interaction with DNA and leading to the modulation of expression of genes regulated by Mlc, including ptsG, which encodes the PTS system glucose-specific EIICB component. Functionally, shows zinc-dependent metallopeptidase activity. This chain is Mlc titration factor A, found in Escherichia fergusonii.